A 436-amino-acid chain; its full sequence is 3-ketoacyl-CoA thiolase (436 aa).

The Acyl-thioester intermediate role is filled by Cys99. Active-site proton acceptor residues include His392 and Cys422.

The protein belongs to the thiolase-like superfamily. Thiolase family. In terms of assembly, heterotetramer of two alpha chains (FadJ) and two beta chains (FadI).

Its subcellular location is the cytoplasm. The catalysed reaction is an acyl-CoA + acetyl-CoA = a 3-oxoacyl-CoA + CoA. The protein operates within lipid metabolism; fatty acid beta-oxidation. In terms of biological role, catalyzes the final step of fatty acid oxidation in which acetyl-CoA is released and the CoA ester of a fatty acid two carbons shorter is formed. The chain is 3-ketoacyl-CoA thiolase from Escherichia coli O7:K1 (strain IAI39 / ExPEC).